Consider the following 206-residue polypeptide: Protein-methionine-sulfoxide reductase heme-binding subunit MsrQ (206 aa).

Transmembrane regions (helical) follow at residues 13 to 33, 79 to 99, 116 to 136, 147 to 167, and 169 to 189; these read IAIWLAATLPLLWLVLSINLG, LLGLWCFAWGTLHLLSYSILE, PYLTLGIISWLVLLALALTST, WQKLHNWVYVVAILAPIHYLW, and VKTLSPWPIIYAVMAALLLLL.

Belongs to the MsrQ family. Heterodimer of a catalytic subunit (MsrP) and a heme-binding subunit (MsrQ). FMN serves as cofactor. Requires heme b as cofactor.

The protein resides in the cell inner membrane. Functionally, part of the MsrPQ system that repairs oxidized periplasmic proteins containing methionine sulfoxide residues (Met-O), using respiratory chain electrons. Thus protects these proteins from oxidative-stress damage caused by reactive species of oxygen and chlorine generated by the host defense mechanisms. MsrPQ is essential for the maintenance of envelope integrity under bleach stress, rescuing a wide series of structurally unrelated periplasmic proteins from methionine oxidation. MsrQ provides electrons for reduction to the reductase catalytic subunit MsrP, using the quinone pool of the respiratory chain. The protein is Protein-methionine-sulfoxide reductase heme-binding subunit MsrQ of Yersinia pestis bv. Antiqua (strain Antiqua).